The chain runs to 268 residues: Tryptophan synthase alpha chain (268 aa).

Residues Glu-49 and Asp-60 each act as proton acceptor in the active site.

It belongs to the TrpA family. Tetramer of two alpha and two beta chains.

The catalysed reaction is (1S,2R)-1-C-(indol-3-yl)glycerol 3-phosphate + L-serine = D-glyceraldehyde 3-phosphate + L-tryptophan + H2O. Its pathway is amino-acid biosynthesis; L-tryptophan biosynthesis; L-tryptophan from chorismate: step 5/5. The alpha subunit is responsible for the aldol cleavage of indoleglycerol phosphate to indole and glyceraldehyde 3-phosphate. This Yersinia pseudotuberculosis serotype O:3 (strain YPIII) protein is Tryptophan synthase alpha chain.